The sequence spans 1400 residues: DNA-directed RNA polymerase subunit beta' (1400 aa).

Zn(2+) is bound by residues Cys71, Cys73, Cys86, and Cys89. The Mg(2+) site is built by Asp462, Asp464, and Asp466. Zn(2+) contacts are provided by Cys810, Cys884, Cys891, and Cys894. The disordered stretch occupies residues 1377-1400 (REKQATIVPPAAPEAEPLALPPVE).

The protein belongs to the RNA polymerase beta' chain family. The RNAP catalytic core consists of 2 alpha, 1 beta, 1 beta' and 1 omega subunit. When a sigma factor is associated with the core the holoenzyme is formed, which can initiate transcription. Mg(2+) is required as a cofactor. Requires Zn(2+) as cofactor.

It carries out the reaction RNA(n) + a ribonucleoside 5'-triphosphate = RNA(n+1) + diphosphate. Functionally, DNA-dependent RNA polymerase catalyzes the transcription of DNA into RNA using the four ribonucleoside triphosphates as substrates. In Rhodopseudomonas palustris (strain HaA2), this protein is DNA-directed RNA polymerase subunit beta'.